The sequence spans 460 residues: MRVAFIHPDLGIGGAERWVVDAAVGLQNLGHEVDIYTSYCNKSHCFDEVRDGLLKVTVLGDTICPHTIKGKFAIFCATFRQLHLAYELKKGPGSKVDVFVVDQLSACVPLLKLWFPKARVLFYGHFPDQLLVQNRNQMSLVKKAYRYPFDKFEEITTASADRLVVNSHFTKDMFEKTFPATKNPLVIYPCVDTDIKEQQQGLDRDMITAASQYTFLLSINRFERKKNILLAIEAFGEAQKKSSNLKLAVAGGYDFRVNENVEYLQELILACEKLKLSHISITADKYAKLLEKDTPAAVWTSIFKNDVIFFPSASNSFKNTLLHISKLLLYTPQNEHFGIVPLEGMLWKTPVLATNSGGPLETVKDNVGWTVEGKSELWAPVIDKVVHMNASDYAVLQTECVNWVNRFSQDTMASELEEAMEEVRKKAPTENVGWDYIRLGMWYSVLMTLTLSIVLLAIWP.

2 N-linked (GlcNAc...) asparagine glycosylation sites follow: N41 and N389. Residues 439–459 (LGMWYSVLMTLTLSIVLLAIW) traverse the membrane as a helical segment.

Belongs to the glycosyltransferase group 1 family.

It is found in the endoplasmic reticulum membrane. It carries out the reaction a beta-D-Man-(1-&gt;4)-beta-D-GlcNAc-(1-&gt;4)-alpha-D-GlcNAc-diphospho-di-trans,poly-cis-dolichol + GDP-alpha-D-mannose = an alpha-D-Man-(1-&gt;3)-beta-D-Man-(1-&gt;4)-beta-D-GlcNAc-(1-&gt;4)-alpha-D-GlcNAc-diphospho-di-trans,poly-cis-dolichol + GDP + H(+). It catalyses the reaction an alpha-D-Man-(1-&gt;3)-beta-D-Man-(1-&gt;4)-beta-D-GlcNAc-(1-&gt;4)-alpha-D-GlcNAc-diphospho-di-trans,poly-cis-dolichol + GDP-alpha-D-mannose = an alpha-D-Man-(1-&gt;3)-[alpha-D-Man-(1-&gt;6)]-beta-D-Man-(1-&gt;4)-beta-D-GlcNAc-(1-&gt;4)-alpha-D-GlcNAc-diphospho-di-trans,poly-cis-dolichol + GDP + H(+). It participates in protein modification; protein glycosylation. Mannosylates Man(2)GlcNAc(2)-dolichol diphosphate and Man(1)GlcNAc(2)-dolichol diphosphate to form Man(3)GlcNAc(2)-dolichol diphosphate. The polypeptide is Alpha-1,3/1,6-mannosyltransferase ALG2 (ALG2) (Yarrowia lipolytica (strain CLIB 122 / E 150) (Yeast)).